Consider the following 337-residue polypeptide: MQIVDQMRDQAFEELNLVNDKKSLDDIRVKYLGKKGELTGMMRLIATLPNEEKPKLGQAVNIAKEALQNAINEKLAKFEEAELNEKLASEKIDVTLKGVGQNQGSLHPVTKTLNRIEAFFKQNGFAVEVGPEIESDYYNFETLNIPSHHPARAMHDTFYIDDTHVLRTHTSGVQIRTMEKQQPPIRIIAPGRVYRCDSDITHTPMFHQVEGLLVDKDVSFADLKGLLHAFLNSFFEKDLKVRFRPSYFPFTEPSAEADMECVMCDGKGCRVCKHTGWLEVLGCGMVHPKVLKAGNIDSENYQGFAFGMGVERLSMLRYGIDDLRMFFENDLRFLKQF.

Residue glutamate 252 participates in Mg(2+) binding.

This sequence belongs to the class-II aminoacyl-tRNA synthetase family. Phe-tRNA synthetase alpha subunit type 1 subfamily. Tetramer of two alpha and two beta subunits. The cofactor is Mg(2+).

Its subcellular location is the cytoplasm. It carries out the reaction tRNA(Phe) + L-phenylalanine + ATP = L-phenylalanyl-tRNA(Phe) + AMP + diphosphate + H(+). The polypeptide is Phenylalanine--tRNA ligase alpha subunit (Francisella philomiragia subsp. philomiragia (strain ATCC 25017 / CCUG 19701 / FSC 153 / O#319-036)).